The primary structure comprises 275 residues: Putative acyl-[acyl-carrier-protein] desaturase DesA2 (275 aa).

Fe cation-binding residues include Glu107, His110, Glu159, Glu189, and His192.

It belongs to the fatty acid desaturase type 2 family. Homodimer. Fe(2+) is required as a cofactor.

Its pathway is lipid metabolism; fatty acid metabolism. Functionally, may be a desaturase involved in mycobacterial fatty acid biosynthesis. The sequence is that of Putative acyl-[acyl-carrier-protein] desaturase DesA2 (desA2) from Mycobacterium tuberculosis (strain CDC 1551 / Oshkosh).